Reading from the N-terminus, the 106-residue chain is UPF0145 protein BH0643 (106 aa).

This sequence belongs to the UPF0145 family.

In Halalkalibacterium halodurans (strain ATCC BAA-125 / DSM 18197 / FERM 7344 / JCM 9153 / C-125) (Bacillus halodurans), this protein is UPF0145 protein BH0643.